The primary structure comprises 195 residues: 3-hydroxyanthranilate 3,4-dioxygenase (195 aa).

An O2-binding site is contributed by arginine 50. The Fe cation site is built by histidine 54, glutamate 60, and histidine 102. Glutamate 60 contributes to the substrate binding site. Positions 106 and 116 each coordinate substrate. 4 residues coordinate a divalent metal cation: cysteine 131, cysteine 136, cysteine 170, and cysteine 173.

The protein belongs to the 3-HAO family. Requires Fe(2+) as cofactor.

Its subcellular location is the cytoplasm. It catalyses the reaction 3-hydroxyanthranilate + O2 = (2Z,4Z)-2-amino-3-carboxymuconate 6-semialdehyde. It participates in cofactor biosynthesis; NAD(+) biosynthesis; quinolinate from L-kynurenine: step 3/3. Catalyzes the oxidative ring opening of 3-hydroxyanthranilate to 2-amino-3-carboxymuconate semialdehyde, which spontaneously cyclizes to quinolinate. This Aspergillus terreus (strain NIH 2624 / FGSC A1156) protein is 3-hydroxyanthranilate 3,4-dioxygenase (bna1).